The following is a 385-amino-acid chain: Acyl-CoA dehydrogenase IpdE1 (385 aa).

FAD is bound by residues 126–129 (QGYS) and Ser161. Glu244 serves as the catalytic Proton acceptor. FAD is bound at residue 364 to 366 (SNE).

Belongs to the acyl-CoA dehydrogenase family. As to quaternary structure, heterotetramer composed of 2 IpdE1 subunits and 2 IpdE2 subunits. FAD serves as cofactor.

The catalysed reaction is 3-[(3aS,4S,5R,7aS)-5-hydroxy-7a-methyl-1-oxo-octahydro-1H-inden-4-yl]propanoyl-CoA + A = (2E)-3-[(3aS,4S,5R,7aS)-5-hydroxy-7a-methyl-1-oxo-octahydro-1H-inden-4-yl]prop-2-enoyl-CoA + AH2. The protein operates within steroid metabolism; cholesterol degradation. In terms of biological role, involved in cholesterol degradation. Catalyzes the dehydrogenation of 5OH-HIP-CoA to 5OH-HIPE-CoA. Can also use octanoyl-CoA and dihydroferuloyl-CoA, with lower efficiency. Cannot use 3-oxo-4-pregnene-20-carboxyl-CoA (3-OPC-CoA). The chain is Acyl-CoA dehydrogenase IpdE1 from Mycobacterium tuberculosis (strain ATCC 25618 / H37Rv).